The primary structure comprises 55 residues: ATP synthase F(0) complex subunit 8 (55 aa).

Residues 4-24 (LNPAPWFMIFMFTWAIFLTIL) form a helical membrane-spanning segment. The tract at residues 34-55 (PNEPSPQGMTTPKTAPWNWPWH) is disordered.

This sequence belongs to the ATPase protein 8 family. As to quaternary structure, component of the ATP synthase complex composed at least of ATP5F1A/subunit alpha, ATP5F1B/subunit beta, ATP5MC1/subunit c (homooctomer), MT-ATP6/subunit a, MT-ATP8/subunit 8, ATP5ME/subunit e, ATP5MF/subunit f, ATP5MG/subunit g, ATP5MK/subunit k, ATP5MJ/subunit j, ATP5F1C/subunit gamma, ATP5F1D/subunit delta, ATP5F1E/subunit epsilon, ATP5PF/subunit F6, ATP5PB/subunit b, ATP5PD/subunit d, ATP5PO/subunit OSCP. ATP synthase complex consists of a soluble F(1) head domain (subunits alpha(3) and beta(3)) - the catalytic core - and a membrane F(0) domain - the membrane proton channel (subunits c, a, 8, e, f, g, k and j). These two domains are linked by a central stalk (subunits gamma, delta, and epsilon) rotating inside the F1 region and a stationary peripheral stalk (subunits F6, b, d, and OSCP).

It localises to the mitochondrion membrane. Its function is as follows. Subunit 8, of the mitochondrial membrane ATP synthase complex (F(1)F(0) ATP synthase or Complex V) that produces ATP from ADP in the presence of a proton gradient across the membrane which is generated by electron transport complexes of the respiratory chain. ATP synthase complex consist of a soluble F(1) head domain - the catalytic core - and a membrane F(1) domain - the membrane proton channel. These two domains are linked by a central stalk rotating inside the F(1) region and a stationary peripheral stalk. During catalysis, ATP synthesis in the catalytic domain of F(1) is coupled via a rotary mechanism of the central stalk subunits to proton translocation. In vivo, can only synthesize ATP although its ATP hydrolase activity can be activated artificially in vitro. Part of the complex F(0) domain. This is ATP synthase F(0) complex subunit 8 from Gadus morhua (Atlantic cod).